The following is a 158-amino-acid chain: UPF0262 protein R00612 (158 aa).

This sequence belongs to the UPF0262 family.

This Rhizobium meliloti (strain 1021) (Ensifer meliloti) protein is UPF0262 protein R00612.